The following is a 446-amino-acid chain: uncharacterized protein (446 aa).

Disordered regions lie at residues 198-233 (SIQK…ENYS), 309-337 (NEDN…DDSK), and 394-431 (SESV…FGNT). Residues 199–224 (IQKQIPKQTQEQTQKQTQEQTQESSQ) show a composition bias toward low complexity. Residues 317 to 333 (DNEEDSDESDIESDSDL) are compositionally biased toward acidic residues. A compositionally biased stretch (basic and acidic residues) spans 397-418 (VKSDSNESKSIKPESIKSESIK).

This is an uncharacterized protein from Acanthamoeba polyphaga mimivirus (APMV).